The following is a 914-amino-acid chain: Probable dipeptidyl-aminopeptidase B (914 aa).

The span at 1-10 (MATFSDHETS) shows a compositional bias: basic and acidic residues. The segment at 1–63 (MATFSDHETS…TGMDNGDRYR (63 aa)) is disordered. Residues 1-91 (MATFSDHETS…KAATGGRARR (91 aa)) are Cytoplasmic-facing. The span at 20–35 (STSSASQTSSDSGLSS) shows a compositional bias: low complexity. Over residues 45-56 (QPFSAPNGTTGM) the composition is skewed to polar residues. The helical; Signal-anchor for type II membrane protein transmembrane segment at 92–112 (IFWLLVLLCFGGWLLAFVLFL) threads the bilayer. Topologically, residues 113-914 (TGGRANYQSA…RFKRSLPVLV (802 aa)) are vacuolar. N-linked (GlcNAc...) asparagine glycans are attached at residues N348, N565, and N639. Residue S753 is the Charge relay system of the active site. N-linked (GlcNAc...) asparagine glycosylation is present at N807. Residues D830 and H863 each act as charge relay system in the active site.

It belongs to the peptidase S9B family.

Its subcellular location is the vacuole membrane. It catalyses the reaction Release of an N-terminal dipeptide, Xaa-Yaa-|-Zaa-, from a polypeptide, preferentially when Yaa is Pro, provided Zaa is neither Pro nor hydroxyproline.. Its function is as follows. Type IV dipeptidyl-peptidase which removes N-terminal dipeptides sequentially from polypeptides having unsubstituted N-termini provided that the penultimate residue is proline. The protein is Probable dipeptidyl-aminopeptidase B (dapB) of Aspergillus clavatus (strain ATCC 1007 / CBS 513.65 / DSM 816 / NCTC 3887 / NRRL 1 / QM 1276 / 107).